Reading from the N-terminus, the 423-residue chain is F-box/LRR-repeat protein 2 (423 aa).

An F-box domain is found at 9–55 (GLINKKLPKELLLRIFSFLDIVTLCRCAQISKAWNILALDGSNWQRI). LRR repeat units lie at residues 61-87 (QTDV…SLRG), 88-113 (CIGV…NLNG), 114-139 (CTKI…DLTS), 140-165 (CVSI…NLSW), 166-191 (CDQI…LLRG), 192-217 (CTQL…NLQS), 218-243 (CSRI…CLSG), 244-269 (CSNL…EAAR), 270-295 (CSHL…DLEE), 296-321 (CILI…SLSH), 322-350 (CELI…ELDN), 351-375 (CLLI…ELYD), and 376-401 (CQQV…AYFA). Residues 80–90 (LRKLSLRGCIG) form an interaction with Calmodulin region. A Glycyl lysine isopeptide (Lys-Gly) (interchain with G-Cter in ubiquitin) cross-link involves residue Lys201. A Phosphothreonine modification is found at Thr404. Cys420 carries S-geranylgeranyl cysteine lipidation. Residues 420–423 (CVIL) carry the CAAX motif motif.

Part of the SCF (SKP1-CUL1-F-box) E3 ubiquitin-protein ligase complex SCF(FBXL2) composed of CUL1, SKP1, RBX1 and FBXL2. Interacts with calmodulin; may antagonize substrate ubiquitination by SCF(FBXL2). May interact with PIK3R1. Interacts with PTPN13. As to quaternary structure, (Microbial infection) Interacts with hepatitis C virus non-structural protein 5A (NS5A) and less efficiently, with hepatitis C virus non-structural protein 5B (NS5B); a reaction crucial for hepatitis C virus RNA replication. Phosphorylated by GSK-beta (GSK3B), promoting recognition by FBXO3, leading to its ubiquitination by the SCF(FBXO3) complex. In terms of processing, ubiquitinated at Lys-201 by the SCF(FBXO3) complex in response to lipopolysaccharide (LPS), leading to its degradation by the proteasome. As to expression, expressed in brain, heart, kidney, liver, lung, pancreas and placenta.

It is found in the membrane. It functions in the pathway protein modification; protein ubiquitination. Functionally, calcium-activated substrate recognition component of the SCF (SKP1-cullin-F-box protein) E3 ubiquitin-protein ligase complex, SCF(FBXL2), which mediates the ubiquitination and subsequent proteasomal degradation of target proteins. Unlike many F-box proteins, FBXL2 does not seem to target phosphodegron within its substrates but rather calmodulin-binding motifs and is thereby antagonized by calmodulin. This is the case for the cyclins CCND2 and CCND3 which polyubiquitination and subsequent degradation are inhibited by calmodulin. Through CCND2 and CCND3 degradation induces cell-cycle arrest in G(0). SCF(FBXL2) also mediates PIK3R2 ubiquitination and proteasomal degradation thereby regulating phosphatidylinositol 3-kinase signaling and autophagy. PCYT1A monoubiquitination by SCF(FBXL2) and subsequent degradation regulates synthesis of phosphatidylcholine, which is utilized for formation of membranes and of pulmonary surfactant. The SCF(FBXL2) complex acts as a regulator of inflammation by mediating ubiquitination and degradation of TRAF proteins (TRAF1, TRAF2, TRAF3, TRAF4, TRAF5 and TRAF6). The SCF(FBXL2) complex acts as a negative regulator of the NLRP3 inflammasome by mediating ubiquitination and degradation of NLRP3. The protein is F-box/LRR-repeat protein 2 of Homo sapiens (Human).